An 884-amino-acid chain; its full sequence is Telomerase reverse transcriptase (884 aa).

Residues 422–725 (CRNHNSYTLS…TVIQFCAMHI (304 aa)) enclose the Reverse transcriptase domain. Mg(2+) contacts are provided by D530, D670, and D671.

Belongs to the reverse transcriptase family. Telomerase subfamily. Catalytic subunit of the telomerase holoenzyme complex composed minimally of EST2 and the telomerase RNA template component.

It is found in the nucleus. Its subcellular location is the chromosome. The protein resides in the telomere. It carries out the reaction DNA(n) + a 2'-deoxyribonucleoside 5'-triphosphate = DNA(n+1) + diphosphate. Its function is as follows. Telomerase is a ribonucleoprotein enzyme essential for the replication of chromosome termini in most eukaryotes. It elongates telomeres. It is a reverse transcriptase that adds simple sequence repeats to chromosome ends by copying a template sequence within the RNA component of the enzyme. This Saccharomyces cerevisiae (strain ATCC 204508 / S288c) (Baker's yeast) protein is Telomerase reverse transcriptase (EST2).